We begin with the raw amino-acid sequence, 39 residues long: Large ribosomal subunit protein bL36 (39 aa).

Belongs to the bacterial ribosomal protein bL36 family.

In Lactiplantibacillus plantarum (strain ATCC BAA-793 / NCIMB 8826 / WCFS1) (Lactobacillus plantarum), this protein is Large ribosomal subunit protein bL36.